We begin with the raw amino-acid sequence, 139 residues long: Flagellar assembly factor FliW 2 (139 aa).

This sequence belongs to the FliW family. In terms of assembly, interacts with translational regulator CsrA and flagellin(s).

Its subcellular location is the cytoplasm. Acts as an anti-CsrA protein, binds CsrA and prevents it from repressing translation of its target genes, one of which is flagellin. Binds to flagellin and participates in the assembly of the flagellum. This is Flagellar assembly factor FliW 2 from Helicobacter hepaticus (strain ATCC 51449 / 3B1).